The primary structure comprises 213 residues: TVP38/TMEM64 family membrane protein YtxB (213 aa).

The next 6 helical transmembrane spans lie at 9–29 (WLAV…YLNV), 34–54 (IRVW…GISI), 58–78 (LVLF…GPLL), 81–101 (LYTL…AGLF), 159–179 (AVGI…FLAG), and 181–201 (LPAF…PFIF).

The protein belongs to the TVP38/TMEM64 family.

The protein localises to the cell membrane. This Bacillus subtilis (strain 168) protein is TVP38/TMEM64 family membrane protein YtxB (ytxB).